The primary structure comprises 139 residues: Large-conductance mechanosensitive channel (139 aa).

The next 2 helical transmembrane spans lie at 17–37 (VVDMAVGVIIGGAFGKIVTSL) and 88–108 (TVDFLILAFVIFLMIKAIMAA).

The protein belongs to the MscL family. Homopentamer.

It localises to the cell inner membrane. In terms of biological role, channel that opens in response to stretch forces in the membrane lipid bilayer. May participate in the regulation of osmotic pressure changes within the cell. This Porphyromonas gingivalis (strain ATCC 33277 / DSM 20709 / CIP 103683 / JCM 12257 / NCTC 11834 / 2561) protein is Large-conductance mechanosensitive channel.